We begin with the raw amino-acid sequence, 188 residues long: Phosphoribosylglycinamide formyltransferase (188 aa).

A N(1)-(5-phospho-beta-D-ribosyl)glycinamide-binding site is contributed by 12–14 (GSN). (6R)-10-formyltetrahydrofolate contacts are provided by residues Lys-66, 91–94 (MRLI), and Asn-108. Residue His-110 is the Proton donor of the active site.

This sequence belongs to the GART family.

It carries out the reaction N(1)-(5-phospho-beta-D-ribosyl)glycinamide + (6R)-10-formyltetrahydrofolate = N(2)-formyl-N(1)-(5-phospho-beta-D-ribosyl)glycinamide + (6S)-5,6,7,8-tetrahydrofolate + H(+). It functions in the pathway purine metabolism; IMP biosynthesis via de novo pathway; N(2)-formyl-N(1)-(5-phospho-D-ribosyl)glycinamide from N(1)-(5-phospho-D-ribosyl)glycinamide (10-formyl THF route): step 1/1. Catalyzes the transfer of a formyl group from 10-formyltetrahydrofolate to 5-phospho-ribosyl-glycinamide (GAR), producing 5-phospho-ribosyl-N-formylglycinamide (FGAR) and tetrahydrofolate. The chain is Phosphoribosylglycinamide formyltransferase from Staphylococcus aureus (strain MRSA252).